The chain runs to 396 residues: Elongation factor Tu (396 aa).

A tr-type G domain is found at 10–206; the sequence is KPHVNIGTIG…AVDESVPDPV (197 aa). Residues 19–26 form a G1 region; the sequence is GHVDHGKT. 19 to 26 contributes to the GTP binding site; the sequence is GHVDHGKT. Residue threonine 26 coordinates Mg(2+). The tract at residues 62 to 66 is G2; the sequence is GITIN. Residues 83–86 form a G3 region; that stretch reads DAPG. GTP-binding positions include 83-87 and 138-141; these read DAPGH and NKAD. Positions 138–141 are G4; the sequence is NKAD. Residues 176–178 form a G5 region; it reads SGL.

This sequence belongs to the TRAFAC class translation factor GTPase superfamily. Classic translation factor GTPase family. EF-Tu/EF-1A subfamily. Monomer.

It localises to the cytoplasm. It catalyses the reaction GTP + H2O = GDP + phosphate + H(+). Its function is as follows. GTP hydrolase that promotes the GTP-dependent binding of aminoacyl-tRNA to the A-site of ribosomes during protein biosynthesis. The chain is Elongation factor Tu from Arthrobacter sp. (strain FB24).